Reading from the N-terminus, the 789-residue chain is Phenylalanine--tRNA ligase beta subunit (789 aa).

One can recognise a tRNA-binding domain in the interval 38 to 151 (KKHLQSFVVV…NTYNVGESFF (114 aa)). The B5 domain occupies 398 to 474 (HNDILLNFSP…RLYGYDKILE (77 aa)). Residues aspartate 452, aspartate 458, glutamate 461, and glutamate 462 each contribute to the Mg(2+) site. The FDX-ACB domain occupies 694-787 (LRYQSVKRDF…ISKGFNGILR (94 aa)).

This sequence belongs to the phenylalanyl-tRNA synthetase beta subunit family. Type 1 subfamily. Tetramer of two alpha and two beta subunits. Mg(2+) is required as a cofactor.

The protein localises to the cytoplasm. It catalyses the reaction tRNA(Phe) + L-phenylalanine + ATP = L-phenylalanyl-tRNA(Phe) + AMP + diphosphate + H(+). The sequence is that of Phenylalanine--tRNA ligase beta subunit from Ehrlichia ruminantium (strain Welgevonden).